A 655-amino-acid polypeptide reads, in one-letter code: SRSF protein kinase 1 (655 aa).

A disordered region spans residues M1–E57. Positions A10–A22 are enriched in basic residues. The span at D40 to E57 shows a compositional bias: acidic residues. S51 is modified (phosphoserine; by CK2). The Protein kinase domain maps to Y80 to L653. ATP is bound by residues L86–V94, K109, and E166–L168. Residue D213 is the Proton acceptor of the active site. 2 disordered regions span residues W238 to T341 and F397 to I417. Residues K265–K276 are compositionally biased toward basic residues. 2 stretches are compositionally biased toward basic and acidic residues: residues R277–E288 and N304–K318. A phosphoserine mark is found at S309, S311, and S333. S555 carries the post-translational modification Phosphoserine; by CK2.

This sequence belongs to the protein kinase superfamily. CMGC Ser/Thr protein kinase family. Monomer. Isoform 2 is found in a multisubunit complex containing seven proteins, named toposome, which separates entangled circular chromatin DNA during chromosome segregation. Isoform 2 interacts with DNAJC8 and AHSA1/AHA1 and this mediates formation of a complex with the Hsp70 /Hsp90 machinery. Isoform 1 is found in a complex with: DHX9, MOV10, MATR3, HNRNPU, NCL, DDX21, HSD17B4, PABPC1, HNRNPM, IGF2BP1, SYNCRIP, RPL3, VIM, YBX1, NPM1, HNRNPA2B1, HNRNPC, RPLP0, RPL7A and RALY. Isoform 2 binds to IGF2BP1, SYNCRIP, HNRNPA2B1 and HNRNPC. Isoform 1 and isoform 2 interact with SAFB which inhibits its activity. Isoform 2 interacts with SAFB2 which inhibits its activity. In terms of assembly, (Microbial infection) Isoform 2 interacts with HHV-1 ICP27 protein. Requires Mg(2+) as cofactor. In terms of tissue distribution, isoform 2 is predominantly expressed in the testis but is also present at lower levels in heart, ovary, small intestine, liver, kidney, pancreas and skeletal muscle. Isoform 1 is only seen in the testis, at lower levels than isoform 2. Highly expressed in different erythroid and lymphoid cell lines, with isoform 2 being far more abundant than isoform 1.

The protein localises to the cytoplasm. It is found in the nucleus. The protein resides in the nucleus matrix. It localises to the microsome. Its subcellular location is the nucleoplasm. The protein localises to the nucleus speckle. It is found in the chromosome. It catalyses the reaction L-seryl-[protein] + ATP = O-phospho-L-seryl-[protein] + ADP + H(+). It carries out the reaction L-threonyl-[protein] + ATP = O-phospho-L-threonyl-[protein] + ADP + H(+). Its activity is regulated as follows. Activated by phosphorylation on Ser-51 and Ser-555. Functionally, serine/arginine-rich protein-specific kinase which specifically phosphorylates its substrates at serine residues located in regions rich in arginine/serine dipeptides, known as RS domains and is involved in the phosphorylation of SR splicing factors and the regulation of splicing. Plays a central role in the regulatory network for splicing, controlling the intranuclear distribution of splicing factors in interphase cells and the reorganization of nuclear speckles during mitosis. Can influence additional steps of mRNA maturation, as well as other cellular activities, such as chromatin reorganization in somatic and sperm cells and cell cycle progression. Isoform 2 phosphorylates SFRS2, ZRSR2, LBR and PRM1. Isoform 2 phosphorylates SRSF1 using a directional (C-terminal to N-terminal) and a dual-track mechanism incorporating both processive phosphorylation (in which the kinase stays attached to the substrate after each round of phosphorylation) and distributive phosphorylation steps (in which the kinase and substrate dissociate after each phosphorylation event). The RS domain of SRSF1 binds first to a docking groove in the large lobe of the kinase domain of SRPK1. This induces certain structural changes in SRPK1 and/or RRM2 domain of SRSF1, allowing RRM2 to bind the kinase and initiate phosphorylation. The cycles continue for several phosphorylation steps in a processive manner (steps 1-8) until the last few phosphorylation steps (approximately steps 9-12). During that time, a mechanical stress induces the unfolding of the beta-4 motif in RRM2, which then docks at the docking groove of SRPK1. This also signals RRM2 to begin to dissociate, which facilitates SRSF1 dissociation after phosphorylation is completed. Isoform 2 can mediate hepatitis B virus (HBV) core protein phosphorylation. It plays a negative role in the regulation of HBV replication through a mechanism not involving the phosphorylation of the core protein but by reducing the packaging efficiency of the pregenomic RNA (pgRNA) without affecting the formation of the viral core particles. Isoform 1 and isoform 2 can induce splicing of exon 10 in MAPT/TAU. The ratio of isoform 1/isoform 2 plays a decisive role in determining cell fate in K-562 leukaemic cell line: isoform 2 favors proliferation where as isoform 1 favors differentiation. The protein is SRSF protein kinase 1 of Homo sapiens (Human).